We begin with the raw amino-acid sequence, 337 residues long: ERI1 exoribonuclease 3 (337 aa).

The Exonuclease domain maps to 146 to 320 (FLVLDFEATC…DDCKNIANIM (175 aa)). Asp-150, Glu-152, and Asp-249 together coordinate Mg(2+). Glu-152 serves as the catalytic Proton acceptor. Residue Glu-152 coordinates AMP. The active-site Proton acceptor is the His-307. His-307 contacts AMP. Asp-312 contributes to the Mg(2+) binding site.

In terms of assembly, interacts with PRNP. Mg(2+) is required as a cofactor. In terms of tissue distribution, highly expressed in the brain, heart, thyroid and testis. Expressed at low levels in the muscle cells, liver, pancreas and kidney.

The sequence is that of ERI1 exoribonuclease 3 (Eri3) from Mus musculus (Mouse).